Here is a 263-residue protein sequence, read N- to C-terminus: uncharacterized protein (263 aa).

This is an uncharacterized protein from Archaeoglobus fulgidus (strain ATCC 49558 / DSM 4304 / JCM 9628 / NBRC 100126 / VC-16).